The sequence spans 344 residues: Uroporphyrinogen decarboxylase (344 aa).

Substrate is bound by residues 23–27 (RQAGR), Asp73, Tyr149, Thr204, and His321.

The protein belongs to the uroporphyrinogen decarboxylase family. As to quaternary structure, homodimer.

It localises to the cytoplasm. The enzyme catalyses uroporphyrinogen III + 4 H(+) = coproporphyrinogen III + 4 CO2. Its pathway is porphyrin-containing compound metabolism; protoporphyrin-IX biosynthesis; coproporphyrinogen-III from 5-aminolevulinate: step 4/4. Catalyzes the decarboxylation of four acetate groups of uroporphyrinogen-III to yield coproporphyrinogen-III. This chain is Uroporphyrinogen decarboxylase, found in Francisella tularensis subsp. holarctica (strain LVS).